A 162-amino-acid polypeptide reads, in one-letter code: Zinc finger protein 593 homolog (162 aa).

Residues 59–83 form a C2H2-type zinc finger; the sequence is FYCVHCAKYFIDDTAMQAHFRTKVH. Residues 110–162 are disordered; it reads VKPKKRAMETQPSKEDVVAGKRIRVEVVPEDTDATDSPSTSKTKRKKVEKMET. Basic and acidic residues predominate over residues 115–136; it reads RAMETQPSKEDVVAGKRIRVEV. Residues 151 to 162 are compositionally biased toward basic residues; that stretch reads KTKRKKVEKMET.

This sequence belongs to the ZNF593/BUD20 C2H2-type zinc-finger protein family. Associates with pre-60S ribosomal particles; released from the pre-60S particle very early in the cytoplasm.

The protein localises to the nucleus. Its subcellular location is the cytoplasm. Functionally, involved in pre-60S ribosomal particles maturation by promoting the nuclear export of the 60S ribosome. The sequence is that of Zinc finger protein 593 homolog from Drosophila melanogaster (Fruit fly).